The chain runs to 294 residues: Glutamyl-Q tRNA(Asp) synthetase (294 aa).

Residues 7-11 (RFAPS) and E43 each bind L-glutamate. The 'HIGH' region motif lies at 10-20 (PSPSGPLHFGS). Positions 99, 101, 113, and 117 each coordinate Zn(2+). The L-glutamate site is built by Y168 and R186. Positions 224–228 (KLSKQ) match the 'KMSKS' region motif. K227 contributes to the ATP binding site.

It belongs to the class-I aminoacyl-tRNA synthetase family. GluQ subfamily. Zn(2+) serves as cofactor.

In terms of biological role, catalyzes the tRNA-independent activation of glutamate in presence of ATP and the subsequent transfer of glutamate onto a tRNA(Asp). Glutamate is transferred on the 2-amino-5-(4,5-dihydroxy-2-cyclopenten-1-yl) moiety of the queuosine in the wobble position of the QUC anticodon. The polypeptide is Glutamyl-Q tRNA(Asp) synthetase (Vibrio parahaemolyticus serotype O3:K6 (strain RIMD 2210633)).